The primary structure comprises 134 residues: Interleukin-5 (134 aa).

The first 19 residues, 1–19 (MRMLLHLSLLALGASYMYA), serve as a signal peptide directing secretion. A glycan (O-linked (GalNAc...) threonine) is linked at threonine 22. Asparagine 47 and asparagine 90 each carry an N-linked (GlcNAc...) asparagine glycan.

This sequence belongs to the IL-5 family. In terms of assembly, homodimer; disulfide-linked. Interacts with IL5RA. Interacts with CSF2RB.

It is found in the secreted. Functionally, homodimeric cytokine expressed predominantly by T-lymphocytes and NK cells that plays an important role in the survival, differentiation, and chemotaxis of eosinophils. Also acts on activated and resting B-cells to induce immunoglobulin production, growth, and differentiation. Mechanistically, exerts its biological effects through a receptor composed of IL5RA subunit and the cytokine receptor common subunit beta/CSF2RB. Binding to the receptor leads to activation of various kinases including LYN, SYK and JAK2 and thereby propagates signals through the RAS-MAPK and JAK-STAT5 pathways respectively. The polypeptide is Interleukin-5 (IL5) (Cercocebus atys (Sooty mangabey)).